Consider the following 58-residue polypeptide: U8-ctenitoxin-Pk1a (58 aa).

Cystine bridges form between C2-C16, C9-C22, C15-C40, C24-C38, and C48-C55.

As to expression, expressed by the venom gland.

The protein resides in the secreted. Its function is as follows. No toxic effects on mice at dose levels of 5 ug per mouse. May be toxic to insects. In Phoneutria keyserlingi (Brazilian wandering spider), this protein is U8-ctenitoxin-Pk1a.